The primary structure comprises 333 residues: Probable tRNA pseudouridine synthase B (333 aa).

Asp66 acts as the Nucleophile in catalysis. The PUA domain occupies 233–308 (LKKIIVKDSA…EVVEITRVIM (76 aa)).

Belongs to the pseudouridine synthase TruB family. Type 2 subfamily.

The catalysed reaction is uridine(55) in tRNA = pseudouridine(55) in tRNA. In terms of biological role, could be responsible for synthesis of pseudouridine from uracil-55 in the psi GC loop of transfer RNAs. The sequence is that of Probable tRNA pseudouridine synthase B from Methanococcus maripaludis (strain C5 / ATCC BAA-1333).